The following is a 154-amino-acid chain: Large-conductance mechanosensitive channel (154 aa).

2 helical membrane passes run 14-34 and 86-106; these read VVDL…VNSL and VFIN…FFVV.

This sequence belongs to the MscL family. As to quaternary structure, homopentamer.

Its subcellular location is the cell membrane. Its function is as follows. Channel that opens in response to stretch forces in the membrane lipid bilayer. May participate in the regulation of osmotic pressure changes within the cell. This chain is Large-conductance mechanosensitive channel, found in Dehalococcoides mccartyi (strain CBDB1).